The chain runs to 187 residues: Cell division protein SepF (187 aa).

It belongs to the SepF family. Homodimer. Interacts with FtsZ.

It localises to the cytoplasm. In terms of biological role, cell division protein that is part of the divisome complex and is recruited early to the Z-ring. Probably stimulates Z-ring formation, perhaps through the cross-linking of FtsZ protofilaments. Its function overlaps with FtsA. The protein is Cell division protein SepF of Streptococcus suis (strain 98HAH33).